A 146-amino-acid chain; its full sequence is UPF0735 ACT domain-containing protein Teth514_2312 (146 aa).

One can recognise an ACT domain in the interval threonine 71 to glutamate 146.

It belongs to the UPF0735 family.

The polypeptide is UPF0735 ACT domain-containing protein Teth514_2312 (Thermoanaerobacter sp. (strain X514)).